Consider the following 491-residue polypeptide: Cobyric acid synthase (491 aa).

Positions 250 to 437 (RLRVVVPVLP…LHGIFDHPAA (188 aa)) constitute a GATase cobBQ-type domain. The active-site Nucleophile is the Cys331. His429 is an active-site residue.

It belongs to the CobB/CobQ family. CobQ subfamily.

It participates in cofactor biosynthesis; adenosylcobalamin biosynthesis. Functionally, catalyzes amidations at positions B, D, E, and G on adenosylcobyrinic A,C-diamide. NH(2) groups are provided by glutamine, and one molecule of ATP is hydrogenolyzed for each amidation. The chain is Cobyric acid synthase from Xanthomonas campestris pv. campestris (strain B100).